The sequence spans 83 residues: DNA-directed RNA polymerase subunit Rpo5 (83 aa).

The protein belongs to the archaeal Rpo5/eukaryotic RPB5 RNA polymerase subunit family. As to quaternary structure, part of the RNA polymerase complex.

The protein localises to the cytoplasm. The enzyme catalyses RNA(n) + a ribonucleoside 5'-triphosphate = RNA(n+1) + diphosphate. In terms of biological role, DNA-dependent RNA polymerase (RNAP) catalyzes the transcription of DNA into RNA using the four ribonucleoside triphosphates as substrates. This is DNA-directed RNA polymerase subunit Rpo5 from Metallosphaera sedula (strain ATCC 51363 / DSM 5348 / JCM 9185 / NBRC 15509 / TH2).